Here is a 146-residue protein sequence, read N- to C-terminus: uncharacterized protein (146 aa).

The helical transmembrane segment at 6–26 (IPIFVISLSNISHIILAIFFF) threads the bilayer.

The protein resides in the membrane. This is an uncharacterized protein from Caenorhabditis elegans.